The following is a 191-amino-acid chain: Protein Ves (191 aa).

Belongs to the Ves family.

The chain is Protein Ves from Escherichia coli O8 (strain IAI1).